Consider the following 581-residue polypeptide: Proline--tRNA ligase (581 aa).

It belongs to the class-II aminoacyl-tRNA synthetase family. ProS type 1 subfamily. In terms of assembly, homodimer.

The protein resides in the cytoplasm. It carries out the reaction tRNA(Pro) + L-proline + ATP = L-prolyl-tRNA(Pro) + AMP + diphosphate. In terms of biological role, catalyzes the attachment of proline to tRNA(Pro) in a two-step reaction: proline is first activated by ATP to form Pro-AMP and then transferred to the acceptor end of tRNA(Pro). As ProRS can inadvertently accommodate and process non-cognate amino acids such as alanine and cysteine, to avoid such errors it has two additional distinct editing activities against alanine. One activity is designated as 'pretransfer' editing and involves the tRNA(Pro)-independent hydrolysis of activated Ala-AMP. The other activity is designated 'posttransfer' editing and involves deacylation of mischarged Ala-tRNA(Pro). The misacylated Cys-tRNA(Pro) is not edited by ProRS. The protein is Proline--tRNA ligase of Delftia acidovorans (strain DSM 14801 / SPH-1).